Consider the following 433-residue polypeptide: uncharacterized protein (433 aa).

Positions 104 to 349 (ERGRNIIQVR…ELEYKKKGIE (246 aa)) constitute a Radical SAM core domain. Residues Cys118, Cys122, and Cys125 each coordinate [4Fe-4S] cluster. S-adenosyl-L-methionine contacts are provided by residues 171–172 (GE) and 236–238 (MLS). In terms of domain architecture, TRAM spans 370 to 433 (PFKVGEVTKV…KDNIIVAELV (64 aa)).

Belongs to the radical SAM superfamily. It depends on [4Fe-4S] cluster as a cofactor.

This is an uncharacterized protein from Methanocaldococcus jannaschii (strain ATCC 43067 / DSM 2661 / JAL-1 / JCM 10045 / NBRC 100440) (Methanococcus jannaschii).